The sequence spans 587 residues: MFRTHTCGELRISDVNKQITLSGWVQRSRKMGGMTFIDLRDRYGITQLVFNEEINAELCDRANKLGREFVIQITGTVNERFSKNANIPTGDIEIIVSELNVLNTAMTPPFTIEDNTDGGDDIRMKYRYLDLRRNAVRSNLELRHKMTIEVRKYLDSLGFIEVETPVLIGSTPEGARDFVVPSRMNPGQFYALPQSPQTLKQLLMVSGFDRYFQIAKCFRDEDLRADRQPEFTQIDCEMSFVEQEDIISTFEGMAKHLFKTLRGVELTEPFQRMPWADAMKYYGSDKPDLRFGMKFVELMDIMKGHGFSVFDNAAYVGGICAEGAATYTRKQLDALTEFVKKPQIGAKGMVYARVEADGTVKSSVDKFYTQEVLQQMKEAFGAKPGDLILILSGDDVMKTRKQLCELRLEMGSQLGLRDKNKFVCLWVIDFPMFEWSEEEGRLMAMHHPFTHPKEEDIPLLDTDPAAVRADAYDMVVNGVEVGGGSIRIHDAQLQARMFEILGFTPEKAQAQFGFLMNAFKYGAPPHGGLAYGLDRWVSLFAGLDSIRDCIAFPKNNSGRDVMLDAPSEIDQTQLDELNLIVDIKENK.

Glutamate 173 is an L-aspartate binding site. The interval glutamine 197–lysine 200 is aspartate. Arginine 219 is a binding site for L-aspartate. ATP contacts are provided by residues arginine 219 to glutamate 221 and glutamine 228. Residue histidine 446 participates in L-aspartate binding. Glutamate 480 serves as a coordination point for ATP. Arginine 487 provides a ligand contact to L-aspartate. ATP is bound at residue glycine 532 to arginine 535.

The protein belongs to the class-II aminoacyl-tRNA synthetase family. Type 1 subfamily. Homodimer.

It localises to the cytoplasm. It carries out the reaction tRNA(Asp) + L-aspartate + ATP = L-aspartyl-tRNA(Asp) + AMP + diphosphate. Catalyzes the attachment of L-aspartate to tRNA(Asp) in a two-step reaction: L-aspartate is first activated by ATP to form Asp-AMP and then transferred to the acceptor end of tRNA(Asp). The chain is Aspartate--tRNA ligase from Bacteroides thetaiotaomicron (strain ATCC 29148 / DSM 2079 / JCM 5827 / CCUG 10774 / NCTC 10582 / VPI-5482 / E50).